The chain runs to 300 residues: uncharacterized protein (300 aa).

Over 1 to 7 (MGSTRKG) the chain is Periplasmic. The chain crosses the membrane as a helical span at residues 8 to 28 (MLNVLIAAVLWGSSGVCAQYI). In terms of domain architecture, EamA 1 spans 16–145 (VLWGSSGVCA…SLIGTFLLVT (130 aa)). Residues 29 to 45 (MEQSRMSSQFLTMIRLL) are Cytoplasmic-facing. The chain crosses the membrane as a helical span at residues 46 to 66 (FAGLILVTFSFMHGDKIFSIL). Residues 67 to 71 (KNRKD) are Periplasmic-facing. The helical transmembrane segment at 72 to 92 (ALSLLIFSVVGALTVQLTFLL) threads the bilayer. Residues 93-99 (TIEKSNA) lie on the Cytoplasmic side of the membrane. A helical transmembrane segment spans residues 100–120 (ATATVLQFLSPTIIVAWFALA). Over 121–124 (RRTR) the chain is Periplasmic. Residues 125 to 145 (PGILVLTAILTSLIGTFLLVT) traverse the membrane as a helical segment. The Cytoplasmic segment spans residues 146–151 (HGNPTS). A helical transmembrane segment spans residues 152–172 (LSISSAALFWGIASAFAAAFY). The EamA 2 domain occupies 167-291 (FAAAFYTTWP…ILSSVILISL (125 aa)). Over 173-184 (TTWPSRLIAQYG) the chain is Periplasmic. A helical membrane pass occupies residues 185–205 (TLPVVGWSMSFGGLILLPFYA). At 206-216 (KEGTHFAVSGS) the chain is on the cytoplasmic side. A helical membrane pass occupies residues 217–237 (LILAFFYLVVIGTSLTFSLYL). The Periplasmic portion of the chain corresponds to 238–263 (KGAQLIGGPKASILSCAEPLSSALLS). A helical transmembrane segment spans residues 264–284 (LLLLGISFTLPDWLGTLLILS). At 285 to 300 (SVILISLDSRRRARAA) the chain is on the cytoplasmic side.

Belongs to the EamA transporter family.

It localises to the cell inner membrane. This is an uncharacterized protein from Salmonella typhimurium (strain LT2 / SGSC1412 / ATCC 700720).